The sequence spans 780 residues: Ral guanine nucleotide dissociation stimulator-like 2 (780 aa).

A disordered region spans residues Met-1 to Arg-92. Ser-13 carries the phosphoserine modification. Residues Gly-31 to Gly-42 show a composition bias toward gly residues. Residues Gln-43–Gly-65 are compositionally biased toward acidic residues. The 125-residue stretch at Ser-89–Arg-213 folds into the N-terminal Ras-GEF domain. The region spanning Leu-244–Pro-516 is the Ras-GEF domain. A compositionally biased stretch (low complexity) spans His-596–Pro-613. Disordered regions lie at residues His-596–Asp-651 and Thr-741–Lys-769. The Ras-associating domain maps to Asp-651–Arg-738. Over residues Thr-741–Ser-758 the composition is skewed to low complexity.

As to quaternary structure, interacts with SAMD9.

Functionally, probable guanine nucleotide exchange factor. Putative effector of Ras and/or Rap. Associates with the GTP-bound form of Rap 1A and H-Ras in vitro. In Canis lupus familiaris (Dog), this protein is Ral guanine nucleotide dissociation stimulator-like 2 (RGL2).